A 674-amino-acid polypeptide reads, in one-letter code: MRLNPGQQHAVEFVTGPCLVLAGAGSGKTRVITNKIAHLIRGCGYQARHIAAVTFTNKAAREMKERVGQTLGRKEARGLMISTFHTLGLDIIKREYAALGMKSNFSLFDDTDQVALLKELTEGLIEDDKVLLQQLISTISNWKNDLKTPAQAAAGAKGERDRIFAHCYGLYDAHMKACNVLDFDDLILLPTLLLQRNDEVRERWQNKIRYLLVDEYQDTNTSQYELVKLLVGQRARFTVVGDDDQSIYSWRGARPQNLVLLSQDFPALQVIKLEQNYRSSGRILKAANILIANNPHVFEKRLFSELGYGAELKVLSANNEEHEAERVTGELIAHHFVNKTQYKDYAILYRGNHQSRVFEKFLMQNRIPYKISGGTSFFSRPEIKDLLAYLRVLTNPDDDSAFLRIVNTPKREIGPATLQKLGEWAMTRNKSLFTASFDMGLSQKLTGRGYDSLTRFTHWLGEIQRLAEREPVAAVRDLIHGIDYESWLYETSPSPKAAEMRMKNVNQLFSWMTEMLEGNELDEPMTLTQVVTRFTLRDMMERGESEEELDQVQLMTLHASKGLEFPYVYMVGMEEGFLPHQSSIDEDNIEEERRLAYVGITRAQKELTFTLCKERRQYGELVRPEPSRFLLELPQDDLIWEQERKVVSAEERMQKGQSHLANLKAMMAAKRAKS.

The UvrD-like helicase ATP-binding domain maps to 1–280 (MRLNPGQQHA…IKLEQNYRSS (280 aa)). ATP-binding positions include 22-29 (AGAGSGKT) and R278. The region spanning 281–562 (GRILKAANIL…QLMTLHASKG (282 aa)) is the UvrD-like helicase C-terminal domain.

The protein belongs to the helicase family. UvrD subfamily. As to quaternary structure, homodimer.

It catalyses the reaction Couples ATP hydrolysis with the unwinding of duplex DNA by translocating in the 3'-5' direction.. It carries out the reaction ATP + H2O = ADP + phosphate + H(+). Functionally, rep helicase is a single-stranded DNA-dependent ATPase involved in DNA replication; it can initiate unwinding at a nick in the DNA. It binds to the single-stranded DNA and acts in a progressive fashion along the DNA in the 3' to 5' direction. This is ATP-dependent DNA helicase Rep from Salmonella typhimurium (strain LT2 / SGSC1412 / ATCC 700720).